The chain runs to 272 residues: 3-methyl-2-oxobutanoate hydroxymethyltransferase (272 aa).

2 residues coordinate Mg(2+): Asp-52 and Asp-91. 3-methyl-2-oxobutanoate contacts are provided by residues 52–53 (DS), Asp-91, and Lys-121. Mg(2+) is bound at residue Glu-123. Glu-190 serves as the catalytic Proton acceptor.

The protein belongs to the PanB family. Homodecamer; pentamer of dimers. Mg(2+) serves as cofactor.

Its subcellular location is the cytoplasm. The enzyme catalyses 3-methyl-2-oxobutanoate + (6R)-5,10-methylene-5,6,7,8-tetrahydrofolate + H2O = 2-dehydropantoate + (6S)-5,6,7,8-tetrahydrofolate. It participates in cofactor biosynthesis; (R)-pantothenate biosynthesis; (R)-pantoate from 3-methyl-2-oxobutanoate: step 1/2. Catalyzes the reversible reaction in which hydroxymethyl group from 5,10-methylenetetrahydrofolate is transferred onto alpha-ketoisovalerate to form ketopantoate. This Christiangramia forsetii (strain DSM 17595 / CGMCC 1.15422 / KT0803) (Gramella forsetii) protein is 3-methyl-2-oxobutanoate hydroxymethyltransferase.